The following is a 319-amino-acid chain: Transcriptional regulator LsrR (319 aa).

The H-T-H motif DNA-binding region spans 32–55 (QSEISERLGLTRLKVSRLLEKGHQ).

It belongs to the SorC transcriptional regulatory family.

The protein resides in the cytoplasm. Inactivated by phosphorylated autoinducer-2 (phospho-AI-2). Phospho-AI-2 acts by binding to LsrR, which is then unable to bind to the promoter regions, allowing the transcription of the target genes. Functionally, transcriptional regulator that represses the expression of the lsr operon (lsrACDBFGE) in the absence of the quorum-sensing signaling molecule autoinducer 2 (AI-2). It also represses the expression of the lsrRK operon. Acts by binding to the intergenic region between the lsr operon and lsrR. In the presence of phosphorylated autoinducer-2 (phospho-AI-2), LsrR is inactivated, leading to the transcription of the genes. The regulatory function of LsrR was thought to be limited to the lsr operon, but it was subsequently shown to be involved, directly or indirectly, in the regulation of SPI-1 and flagella genes. It negatively regulates the expression of those genes, which reduces the ability of Salmonella to invade host cells. This is Transcriptional regulator LsrR from Salmonella typhimurium (strain LT2 / SGSC1412 / ATCC 700720).